The primary structure comprises 395 residues: Acetate kinase (395 aa).

Asparagine 7 is a binding site for Mg(2+). ATP is bound at residue lysine 14. Arginine 92 lines the substrate pocket. Aspartate 149 functions as the Proton donor/acceptor in the catalytic mechanism. Residues 207-211 (HLGNG), 282-284 (DMR), and 329-333 (GIGEN) contribute to the ATP site. Glutamate 382 is a binding site for Mg(2+).

This sequence belongs to the acetokinase family. Homodimer. Mg(2+) serves as cofactor. Mn(2+) is required as a cofactor.

The protein resides in the cytoplasm. The enzyme catalyses acetate + ATP = acetyl phosphate + ADP. It participates in metabolic intermediate biosynthesis; acetyl-CoA biosynthesis; acetyl-CoA from acetate: step 1/2. Its function is as follows. Catalyzes the formation of acetyl phosphate from acetate and ATP. Can also catalyze the reverse reaction. This chain is Acetate kinase, found in Brachyspira hyodysenteriae (strain ATCC 49526 / WA1).